A 415-amino-acid chain; its full sequence is 1-deoxy-D-xylulose 5-phosphate reductoisomerase (415 aa).

NADPH-binding residues include Thr-10, Gly-11, Ser-12, Ile-13, Gly-36, Arg-37, Asn-38, and Asn-128. Residue Lys-129 participates in 1-deoxy-D-xylulose 5-phosphate binding. Position 130 (Glu-130) interacts with NADPH. A Mn(2+)-binding site is contributed by Asp-154. 1-deoxy-D-xylulose 5-phosphate is bound by residues Ser-155, Glu-156, Ser-192, and His-215. Mn(2+) is bound at residue Glu-156. Gly-221 provides a ligand contact to NADPH. 1-deoxy-D-xylulose 5-phosphate contacts are provided by Ser-228, Asn-233, Lys-234, and Glu-237. Residue Glu-237 participates in Mn(2+) binding.

Belongs to the DXR family. Mg(2+) serves as cofactor. Requires Mn(2+) as cofactor.

It catalyses the reaction 2-C-methyl-D-erythritol 4-phosphate + NADP(+) = 1-deoxy-D-xylulose 5-phosphate + NADPH + H(+). It functions in the pathway isoprenoid biosynthesis; isopentenyl diphosphate biosynthesis via DXP pathway; isopentenyl diphosphate from 1-deoxy-D-xylulose 5-phosphate: step 1/6. Its function is as follows. Catalyzes the NADPH-dependent rearrangement and reduction of 1-deoxy-D-xylulose-5-phosphate (DXP) to 2-C-methyl-D-erythritol 4-phosphate (MEP). This Synechococcus sp. (strain CC9605) protein is 1-deoxy-D-xylulose 5-phosphate reductoisomerase.